We begin with the raw amino-acid sequence, 3013 residues long: Protein furry homolog-like (3013 aa).

At Ser-2 the chain carries N-acetylserine. Residues Asp-90–Gln-109 are disordered. The residue at position 844 (Ser-844) is a Phosphoserine. Disordered stretches follow at residues Ser-878–Thr-897 and Val-1476–Lys-1498. Low complexity predominate over residues Val-1476–Thr-1486. A phosphoserine mark is found at Ser-1914, Ser-1935, Ser-1941, Ser-1945, and Ser-1957. Thr-1959 bears the Phosphothreonine mark. Residues Ser-1978, Ser-2272, and Ser-2454 each carry the phosphoserine modification. Positions Asp-2459–Glu-2492 are disordered. Over residues Pro-2464–Gln-2483 the composition is skewed to polar residues. Ser-2499 carries the post-translational modification Phosphoserine. 2 disordered regions span residues Leu-2508 to Ser-2567 and Glu-2636 to Thr-2660. 2 stretches are compositionally biased toward polar residues: residues Ser-2528–Glu-2539 and Asp-2555–Ser-2567.

It belongs to the furry protein family. Widely expressed with higher expression in colon, placenta, brain and cells of lymphoid origin.

Its function is as follows. Plays a key role in maintaining the integrity of polarized cell extensions during morphogenesis, regulates the actin cytoskeleton and plays a key role in patterning sensory neuron dendritic fields by promoting avoidance between homologous dendrites as well as by limiting dendritic branching. May function as a transcriptional activator. The sequence is that of Protein furry homolog-like (FRYL) from Homo sapiens (Human).